A 400-amino-acid polypeptide reads, in one-letter code: Nicotinate phosphoribosyltransferase (400 aa).

H220 bears the Phosphohistidine; by autocatalysis mark.

The protein belongs to the NAPRTase family. Post-translationally, transiently phosphorylated on a His residue during the reaction cycle. Phosphorylation strongly increases the affinity for substrates and increases the rate of nicotinate D-ribonucleotide production. Dephosphorylation regenerates the low-affinity form of the enzyme, leading to product release.

It carries out the reaction nicotinate + 5-phospho-alpha-D-ribose 1-diphosphate + ATP + H2O = nicotinate beta-D-ribonucleotide + ADP + phosphate + diphosphate. It functions in the pathway cofactor biosynthesis; NAD(+) biosynthesis; nicotinate D-ribonucleotide from nicotinate: step 1/1. In terms of biological role, catalyzes the synthesis of beta-nicotinate D-ribonucleotide from nicotinate and 5-phospho-D-ribose 1-phosphate at the expense of ATP. The protein is Nicotinate phosphoribosyltransferase of Citrobacter koseri (strain ATCC BAA-895 / CDC 4225-83 / SGSC4696).